The following is a 689-amino-acid chain: Elongation factor G (689 aa).

One can recognise a tr-type G domain in the interval Glu8–Thr282. GTP is bound by residues Ala17 to Thr24, Asp81 to His85, and Asn135 to Asp138.

Belongs to the TRAFAC class translation factor GTPase superfamily. Classic translation factor GTPase family. EF-G/EF-2 subfamily.

It localises to the cytoplasm. Its function is as follows. Catalyzes the GTP-dependent ribosomal translocation step during translation elongation. During this step, the ribosome changes from the pre-translocational (PRE) to the post-translocational (POST) state as the newly formed A-site-bound peptidyl-tRNA and P-site-bound deacylated tRNA move to the P and E sites, respectively. Catalyzes the coordinated movement of the two tRNA molecules, the mRNA and conformational changes in the ribosome. The chain is Elongation factor G from Desulforudis audaxviator (strain MP104C).